A 397-amino-acid polypeptide reads, in one-letter code: CCA-adding enzyme (397 aa).

Positions 26 and 29 each coordinate ATP. The CTP site is built by glycine 26 and arginine 29. 2 residues coordinate Mg(2+): aspartate 39 and aspartate 41. The ATP site is built by arginine 110, aspartate 153, arginine 156, arginine 159, and arginine 162. Arginine 110, aspartate 153, arginine 156, arginine 159, and arginine 162 together coordinate CTP.

Belongs to the tRNA nucleotidyltransferase/poly(A) polymerase family. Bacterial CCA-adding enzyme type 3 subfamily. As to quaternary structure, homodimer. It depends on Mg(2+) as a cofactor.

The catalysed reaction is a tRNA precursor + 2 CTP + ATP = a tRNA with a 3' CCA end + 3 diphosphate. The enzyme catalyses a tRNA with a 3' CCA end + 2 CTP + ATP = a tRNA with a 3' CCACCA end + 3 diphosphate. Its function is as follows. Catalyzes the addition and repair of the essential 3'-terminal CCA sequence in tRNAs without using a nucleic acid template. Adds these three nucleotides in the order of C, C, and A to the tRNA nucleotide-73, using CTP and ATP as substrates and producing inorganic pyrophosphate. tRNA 3'-terminal CCA addition is required both for tRNA processing and repair. Also involved in tRNA surveillance by mediating tandem CCA addition to generate a CCACCA at the 3' terminus of unstable tRNAs. While stable tRNAs receive only 3'-terminal CCA, unstable tRNAs are marked with CCACCA and rapidly degraded. The sequence is that of CCA-adding enzyme from Bacillus cereus (strain B4264).